Reading from the N-terminus, the 222-residue chain is UPF0758 protein YicR (222 aa).

Positions 100–222 (PLLSPEMTRE…YVSFAERGWI (123 aa)) constitute an MPN domain. The Zn(2+) site is built by histidine 171, histidine 173, and aspartate 184. The short motif at 171–184 (HNHPSGCAEPSKAD) is the JAMM motif element.

It belongs to the UPF0758 family. YicR subfamily.

The protein is UPF0758 protein YicR of Shigella dysenteriae serotype 1 (strain Sd197).